A 429-amino-acid chain; its full sequence is Probable M18 family aminopeptidase 2 (429 aa).

The Zn(2+) site is built by His82, His156, and His401.

It belongs to the peptidase M18 family. It depends on Zn(2+) as a cofactor.

In Pseudomonas entomophila (strain L48), this protein is Probable M18 family aminopeptidase 2.